A 488-amino-acid chain; its full sequence is Receptor-like tyrosine-protein kinase kin-15 (488 aa).

Residues 1 to 26 (MCLKMRYERIKYILLFSLMHLVYSNS) form the signal peptide. Residue asparagine 25 is glycosylated (N-linked (GlcNAc...) asparagine). Residues 27 to 50 (TFESFTENPHISSQISNVLYMDQM) lie on the Extracellular side of the membrane. A helical membrane pass occupies residues 51–70 (FIIYILICILLILISVIVYL). The Cytoplasmic segment spans residues 71–488 (SKRYSQQMMQ…SKLEDWIRRD (418 aa)). Residues 144–458 (EISEDKLGSG…VEFFEEHLSV (315 aa)) enclose the Protein kinase domain. ATP contacts are provided by residues 150-158 (LGSGFFGEV) and lysine 183. The Proton acceptor role is filled by aspartate 319.

The protein belongs to the protein kinase superfamily. Tyr protein kinase family. In terms of tissue distribution, hypodermal cells.

The protein localises to the cell membrane. The enzyme catalyses L-tyrosyl-[protein] + ATP = O-phospho-L-tyrosyl-[protein] + ADP + H(+). May be specifically involved in cell-cell interactions regulating cell fusions that generate the hypodermis during postembryonic development. It has a role in the development of the HYP7 hypodermal syncytium. The chain is Receptor-like tyrosine-protein kinase kin-15 (kin-15) from Caenorhabditis elegans.